The primary structure comprises 173 residues: Large ribosomal subunit protein uL18 (173 aa).

The protein belongs to the universal ribosomal protein uL18 family. Part of the 50S ribosomal subunit. Contacts the 5S and 23S rRNAs.

Its function is as follows. This is one of the proteins that bind and probably mediate the attachment of the 5S RNA into the large ribosomal subunit, where it forms part of the central protuberance. In Methanococcoides burtonii (strain DSM 6242 / NBRC 107633 / OCM 468 / ACE-M), this protein is Large ribosomal subunit protein uL18.